The chain runs to 192 residues: Protein hunchback (192 aa).

Disordered stretches follow at residues 16–59 (SHHH…SNTN), 88–108 (AAMTPSPSNNDQNSPLTWPGL), and 151–192 (ALTP…KYMA). Basic residues predominate over residues 17–31 (HHHHHHHAHHSRRQH). The segment covering 92–103 (PSPSNNDQNSPL) has biased composition (polar residues). The span at 173 to 192 (EPEKEHDLMSNSSEDMKYMA) shows a compositional bias: basic and acidic residues.

It belongs to the hunchback C2H2-type zinc-finger protein family.

It is found in the nucleus. In terms of biological role, gap class segmentation protein that controls development of head structures. The protein is Protein hunchback (hb) of Drosophila adiastola (Fruit fly).